Consider the following 631-residue polypeptide: Origin recognition complex subunit 1 (631 aa).

2 stretches are compositionally biased toward low complexity: residues Met-1–Ile-14 and Lys-22–His-37. The segment at Met-1–Asn-164 is disordered. The segment covering Asp-55–Asn-80 has biased composition (basic and acidic residues). The segment covering Glu-91–Asp-104 has biased composition (acidic residues). The segment covering Glu-105 to Phe-133 has biased composition (basic and acidic residues). Positions Glu-141–Glu-160 are enriched in acidic residues. ATP is bound by residues Val-230 and Gly-265 to Ala-273. Asp-361 and Glu-362 together coordinate Mg(2+). The ATP site is built by Glu-362, Asn-395, and Arg-460.

Belongs to the ORC1 family. ORC is composed of six subunits.

Its subcellular location is the nucleus. Its function is as follows. Component of the origin recognition complex (ORC) that binds origins of replication. DNA-binding is ATP-dependent, however specific DNA sequences that define origins of replication have not been identified so far. ORC is required to assemble the pre-replication complex necessary to initiate DNA replication. This chain is Origin recognition complex subunit 1 (orcA), found in Dictyostelium discoideum (Social amoeba).